An 88-amino-acid chain; its full sequence is Small integral membrane protein 13 (88 aa).

Residues 10-30 (LVFVATLLIVLLLMVCGWYFV) form a helical membrane-spanning segment. Over residues 48 to 60 (TGSQEGDNEQPSG) the composition is skewed to polar residues. Residues 48–88 (TGSQEGDNEQPSGSEAEEDPSASPHKMRSARQRRPPVDDGH) are disordered. 3 positions are modified to phosphoserine: serine 59, serine 61, and serine 70. Residues 72–81 (HKMRSARQRR) are compositionally biased toward basic residues.

Belongs to the SMIM13 family.

The protein resides in the membrane. This chain is Small integral membrane protein 13 (Smim13), found in Rattus norvegicus (Rat).